We begin with the raw amino-acid sequence, 295 residues long: Elongation factor Ts (295 aa).

The segment at 79 to 82 (TDFV) is involved in Mg(2+) ion dislocation from EF-Tu.

The protein belongs to the EF-Ts family.

It is found in the cytoplasm. Associates with the EF-Tu.GDP complex and induces the exchange of GDP to GTP. It remains bound to the aminoacyl-tRNA.EF-Tu.GTP complex up to the GTP hydrolysis stage on the ribosome. The polypeptide is Elongation factor Ts (Bacillus cereus (strain G9842)).